Reading from the N-terminus, the 217-residue chain is Phosphatidylserine decarboxylase proenzyme (217 aa).

The Schiff-base intermediate with substrate; via pyruvic acid role is filled by Ser182. Ser182 is subject to Pyruvic acid (Ser); by autocatalysis.

The protein belongs to the phosphatidylserine decarboxylase family. PSD-A subfamily. Heterodimer of a large membrane-associated beta subunit and a small pyruvoyl-containing alpha subunit. It depends on pyruvate as a cofactor. Is synthesized initially as an inactive proenzyme. Formation of the active enzyme involves a self-maturation process in which the active site pyruvoyl group is generated from an internal serine residue via an autocatalytic post-translational modification. Two non-identical subunits are generated from the proenzyme in this reaction, and the pyruvate is formed at the N-terminus of the alpha chain, which is derived from the carboxyl end of the proenzyme. The post-translation cleavage follows an unusual pathway, termed non-hydrolytic serinolysis, in which the side chain hydroxyl group of the serine supplies its oxygen atom to form the C-terminus of the beta chain, while the remainder of the serine residue undergoes an oxidative deamination to produce ammonia and the pyruvoyl prosthetic group on the alpha chain.

The protein resides in the cell membrane. It catalyses the reaction a 1,2-diacyl-sn-glycero-3-phospho-L-serine + H(+) = a 1,2-diacyl-sn-glycero-3-phosphoethanolamine + CO2. The protein operates within phospholipid metabolism; phosphatidylethanolamine biosynthesis; phosphatidylethanolamine from CDP-diacylglycerol: step 2/2. In terms of biological role, catalyzes the formation of phosphatidylethanolamine (PtdEtn) from phosphatidylserine (PtdSer). The polypeptide is Phosphatidylserine decarboxylase proenzyme (Prosthecochloris aestuarii (strain DSM 271 / SK 413)).